A 502-amino-acid polypeptide reads, in one-letter code: Probable cytosol aminopeptidase (502 aa).

Mn(2+) is bound by residues Lys-269 and Asp-274. Lys-281 is an active-site residue. Mn(2+) is bound by residues Asp-292, Asp-351, and Glu-353. The active site involves Arg-355.

Belongs to the peptidase M17 family. The cofactor is Mn(2+).

It is found in the cytoplasm. It catalyses the reaction Release of an N-terminal amino acid, Xaa-|-Yaa-, in which Xaa is preferably Leu, but may be other amino acids including Pro although not Arg or Lys, and Yaa may be Pro. Amino acid amides and methyl esters are also readily hydrolyzed, but rates on arylamides are exceedingly low.. It carries out the reaction Release of an N-terminal amino acid, preferentially leucine, but not glutamic or aspartic acids.. In terms of biological role, presumably involved in the processing and regular turnover of intracellular proteins. Catalyzes the removal of unsubstituted N-terminal amino acids from various peptides. In Shewanella loihica (strain ATCC BAA-1088 / PV-4), this protein is Probable cytosol aminopeptidase.